The following is a 363-amino-acid chain: Pyrimidine monooxygenase RutA (363 aa).

Residues 49 to 50, Asn115, Glu124, 140 to 141, and Ser190 contribute to the FMN site; these read IK and RY.

The protein belongs to the NtaA/SnaA/DszA monooxygenase family. RutA subfamily.

It carries out the reaction uracil + FMNH2 + NADH + O2 = (Z)-3-ureidoacrylate + FMN + NAD(+) + H2O + H(+). The catalysed reaction is thymine + FMNH2 + NADH + O2 = (Z)-2-methylureidoacrylate + FMN + NAD(+) + H2O + H(+). Its function is as follows. Catalyzes the pyrimidine ring opening between N-3 and C-4 by an unusual flavin hydroperoxide-catalyzed mechanism, adding oxygen atoms in the process to yield ureidoacrylate peracid, that immediately reacts with FMN forming ureidoacrylate and FMN-N(5)-oxide. The FMN-N(5)-oxide reacts spontaneously with NADH to produce FMN. Requires the flavin reductase RutF to regenerate FMN in vivo. In Rhizobium rhizogenes (strain K84 / ATCC BAA-868) (Agrobacterium radiobacter), this protein is Pyrimidine monooxygenase RutA.